A 377-amino-acid polypeptide reads, in one-letter code: MAKRDYYEVLGISKSASADEIKKAYRKLSKQYHPDINKEAGADEKFKEISEAYEALSDPQKRAQYDQYGHVDPNQGFGGGGAGGGFGGGGFSGFEDIFDTFFGGGGRQQDPNAPRQGSDLQYTMRLKFKEAIFGKDAEIEIPREENCDTCHGSGAKPGTTPEKCSHCGGKGSINVEQNTPFGRVVNKRTCQYCNGTGKEIKEKCPTCHGKGRVTKTKKIKVKVPAGVNDGQQMRVSGEGEAGINGGPNGDLYVVFVVIPDEFFEREADDIYVEVPITFVQATLGDEIDVPTVHGKVRLKIPSGTQTGTTFRLRGKGVPHLRGNGTGDQHVIVKVIVPKKLDDKQKEILREFASTTGDKVDEQTSGFFDKMKRAFKGD.

In terms of domain architecture, J spans 5–69 (DYYEVLGISK…QKRAQYDQYG (65 aa)). Residues 134-216 (GKDAEIEIPR…CHGKGRVTKT (83 aa)) form a CR-type zinc finger. The Zn(2+) site is built by cysteine 147, cysteine 150, cysteine 164, cysteine 167, cysteine 190, cysteine 193, cysteine 204, and cysteine 207. CXXCXGXG motif repeat units follow at residues 147-154 (CDTCHGSG), 164-171 (CSHCGGKG), 190-197 (CQYCNGTG), and 204-211 (CPTCHGKG).

This sequence belongs to the DnaJ family. In terms of assembly, homodimer. It depends on Zn(2+) as a cofactor.

It is found in the cytoplasm. In terms of biological role, participates actively in the response to hyperosmotic and heat shock by preventing the aggregation of stress-denatured proteins and by disaggregating proteins, also in an autonomous, DnaK-independent fashion. Unfolded proteins bind initially to DnaJ; upon interaction with the DnaJ-bound protein, DnaK hydrolyzes its bound ATP, resulting in the formation of a stable complex. GrpE releases ADP from DnaK; ATP binding to DnaK triggers the release of the substrate protein, thus completing the reaction cycle. Several rounds of ATP-dependent interactions between DnaJ, DnaK and GrpE are required for fully efficient folding. Also involved, together with DnaK and GrpE, in the DNA replication of plasmids through activation of initiation proteins. This chain is Chaperone protein DnaJ, found in Listeria monocytogenes serotype 1/2a (strain 10403S).